Here is a 65-residue protein sequence, read N- to C-terminus: UPF0434 protein Mmwyl1_2153 (65 aa).

The protein belongs to the UPF0434 family.

The protein is UPF0434 protein Mmwyl1_2153 of Marinomonas sp. (strain MWYL1).